The chain runs to 281 residues: Cytochrome c oxidase subunit 3 (281 aa).

Residues 1–15 are Mitochondrial matrix-facing; the sequence is MTHQTHAYHMVNPSP. The helical transmembrane segment at 16–34 threads the bilayer; sequence WPLTGALSALLLTSGLIMW. Residues 35–40 lie on the Mitochondrial intermembrane side of the membrane; it reads FHYNSS. A helical membrane pass occupies residues 41–66; the sequence is TLMFMGLTTMLLTMYQWWRDIIREGT. Over 67-72 the chain is Mitochondrial matrix; it reads FQGHHT. A helical transmembrane segment spans residues 73 to 105; the sequence is PVVQKGLRYGMILFILSEVFFFIGFFWAFYHSS. Topologically, residues 106–128 are mitochondrial intermembrane; sequence LAPTPELGGCWPPTGIHPLNPLE. The helical transmembrane segment at 129 to 152 threads the bilayer; sequence VPLLNTSILLASGVSITWAHHSLM. Over 153 to 155 the chain is Mitochondrial matrix; the sequence is EGN. A helical membrane pass occupies residues 156 to 183; sequence RKQMIQALLITISLGLYFTILQAMEYYE. Over 184–190 the chain is Mitochondrial intermembrane; the sequence is ASFTISD. A helical membrane pass occupies residues 191–223; the sequence is GVYGSTFFVATGFHGLHVIIGSTFLIVCLLRQL. Residues 224-232 are Mitochondrial matrix-facing; that stretch reads FYHFTSTHH. Residues 233-256 traverse the membrane as a helical segment; it reads FGFEAAAWYWHFVDVVWLFLYVSI. Residues 257–281 are Mitochondrial intermembrane-facing; the sequence is YWWGSYFSSMISTTDFQSLSSGSNQ.

It belongs to the cytochrome c oxidase subunit 3 family. As to quaternary structure, component of the cytochrome c oxidase (complex IV, CIV), a multisubunit enzyme composed of 14 subunits. The complex is composed of a catalytic core of 3 subunits MT-CO1, MT-CO2 and MT-CO3, encoded in the mitochondrial DNA, and 11 supernumerary subunits COX4I, COX5A, COX5B, COX6A, COX6B, COX6C, COX7A, COX7B, COX7C, COX8 and NDUFA4, which are encoded in the nuclear genome. The complex exists as a monomer or a dimer and forms supercomplexes (SCs) in the inner mitochondrial membrane with NADH-ubiquinone oxidoreductase (complex I, CI) and ubiquinol-cytochrome c oxidoreductase (cytochrome b-c1 complex, complex III, CIII), resulting in different assemblies (supercomplex SCI(1)III(2)IV(1) and megacomplex MCI(2)III(2)IV(2)).

Its subcellular location is the mitochondrion inner membrane. The enzyme catalyses 4 Fe(II)-[cytochrome c] + O2 + 8 H(+)(in) = 4 Fe(III)-[cytochrome c] + 2 H2O + 4 H(+)(out). In terms of biological role, component of the cytochrome c oxidase, the last enzyme in the mitochondrial electron transport chain which drives oxidative phosphorylation. The respiratory chain contains 3 multisubunit complexes succinate dehydrogenase (complex II, CII), ubiquinol-cytochrome c oxidoreductase (cytochrome b-c1 complex, complex III, CIII) and cytochrome c oxidase (complex IV, CIV), that cooperate to transfer electrons derived from NADH and succinate to molecular oxygen, creating an electrochemical gradient over the inner membrane that drives transmembrane transport and the ATP synthase. Cytochrome c oxidase is the component of the respiratory chain that catalyzes the reduction of oxygen to water. Electrons originating from reduced cytochrome c in the intermembrane space (IMS) are transferred via the dinuclear copper A center (CU(A)) of subunit 2 and heme A of subunit 1 to the active site in subunit 1, a binuclear center (BNC) formed by heme A3 and copper B (CU(B)). The BNC reduces molecular oxygen to 2 water molecules using 4 electrons from cytochrome c in the IMS and 4 protons from the mitochondrial matrix. This chain is Cytochrome c oxidase subunit 3 (MT-CO3), found in Didelphis virginiana (North American opossum).